A 354-amino-acid polypeptide reads, in one-letter code: S-adenosylmethionine:tRNA ribosyltransferase-isomerase (354 aa).

The protein belongs to the QueA family. As to quaternary structure, monomer.

The protein localises to the cytoplasm. It carries out the reaction 7-aminomethyl-7-carbaguanosine(34) in tRNA + S-adenosyl-L-methionine = epoxyqueuosine(34) in tRNA + adenine + L-methionine + 2 H(+). It functions in the pathway tRNA modification; tRNA-queuosine biosynthesis. Its function is as follows. Transfers and isomerizes the ribose moiety from AdoMet to the 7-aminomethyl group of 7-deazaguanine (preQ1-tRNA) to give epoxyqueuosine (oQ-tRNA). The protein is S-adenosylmethionine:tRNA ribosyltransferase-isomerase of Thermosynechococcus vestitus (strain NIES-2133 / IAM M-273 / BP-1).